A 192-amino-acid polypeptide reads, in one-letter code: Protein LZIC (192 aa).

Positions 6-65 (KTETNKLKVNIEEQLNRLLAQLQDIEELKEDITQEEYDETKKDTLEQMKEFEQSLKKMMS) form a coiled coil.

The protein belongs to the CTNNBIP1 family.

In Dictyostelium discoideum (Social amoeba), this protein is Protein LZIC (lzic).